The following is a 460-amino-acid chain: Diguanylate cyclase DosC (460 aa).

H98 serves as a coordination point for heme. Residues 325 to 458 (TPLSVLIIDV…GRNRVELWKA (134 aa)) form the GGDEF domain. Residue D333 participates in Mg(2+) binding. 2 residues coordinate substrate: N341 and D350. D376 lines the Mg(2+) pocket. Residue D376 is the Proton acceptor of the active site.

It depends on heme as a cofactor. Mg(2+) is required as a cofactor.

It catalyses the reaction 2 GTP = 3',3'-c-di-GMP + 2 diphosphate. It participates in purine metabolism; 3',5'-cyclic di-GMP biosynthesis. Functionally, globin-coupled heme-based oxygen sensor protein displaying diguanylate cyclase (DGC) activity in response to oxygen availability. Thus, catalyzes the synthesis of cyclic diguanylate (c-di-GMP) via the condensation of 2 GTP molecules. Cyclic-di-GMP is a second messenger which controls cell surface-associated traits in bacteria. The sequence is that of Diguanylate cyclase DosC (dosC) from Shigella boydii serotype 4 (strain Sb227).